A 355-amino-acid chain; its full sequence is Myosin-binding protein H-like (355 aa).

Composition is skewed to polar residues over residues 1 to 16 and 31 to 41; these read META…SQRQ and TSHQQEAGSPS. The segment at 1–41 is disordered; it reads METATTLEIASCSQRQVEAAADPADAKGPRTSHQQEAGSPS. At Ser39 the chain carries Phosphoserine. Positions 46-140 constitute an Ig-like C2-type 1 domain; the sequence is PSIEEHPKIW…GGLQATATIN (95 aa). The Fibronectin type-III domain occupies 149-244; it reads PPQSIKLVDV…TADLAHIQKA (96 aa). Positions 262–346 constitute an Ig-like C2-type 2 domain; it reads PKFTQPLADC…INALGEASVD (85 aa). Cys283 and Cys334 are disulfide-bonded. Omega-N-methylarginine is present on Arg322.

Belongs to the immunoglobulin superfamily. MyBP family. In terms of tissue distribution, expressed in the atria as well as in discrete puncta throughout the right ventricular wall and septum.

Its subcellular location is the cytoplasm. It localises to the myofibril. It is found in the sarcomere. Myosin-binding protein which plays a role in cardiac function. Seems to regulate conduction in the atria and ventricular conduction systems. The protein is Myosin-binding protein H-like of Mus musculus (Mouse).